Here is a 376-residue protein sequence, read N- to C-terminus: Cyclic GMP-AMP synthase-like receptor 1 (376 aa).

Mg(2+)-binding residues include Glu77 and Asp79.

The protein belongs to the mab-21 family. It depends on Mg(2+) as a cofactor. Mn(2+) is required as a cofactor.

The catalysed reaction is UTP + ATP = 3',3'-cUAMP + 2 diphosphate. Nucleotidyltransferase that catalyzes the formation of cyclic UMP-AMP (3',3'-cUAMP) from ATP and UTP and plays a key role in innate immunity. Acts as a key sensor of double-stranded RNA (dsRNA), the presence of dsRNA in the cytoplasm being a danger signal that triggers the immune responses. Directly binds dsRNA, activating the nucleotidyltransferase activity, leading to synthesis of 3',3'-cUAMP, a second messenger that binds to and activates Sting, thereby triggering the immune response via activation of the NF-kappa-B transcription factor. This Stylophora pistillata (Smooth cauliflower coral) protein is Cyclic GMP-AMP synthase-like receptor 1.